Consider the following 198-residue polypeptide: Ribosome maturation factor RimP (198 aa).

It belongs to the RimP family.

The protein resides in the cytoplasm. Required for maturation of 30S ribosomal subunits. In Agrobacterium fabrum (strain C58 / ATCC 33970) (Agrobacterium tumefaciens (strain C58)), this protein is Ribosome maturation factor RimP.